The chain runs to 289 residues: Mas-related G-protein coupled receptor member G (289 aa).

Residues 1 to 13 (MFSIFNIWGTFNK) lie on the Extracellular side of the membrane. Residues 14–34 (VLFFLSLTVSLAGLVGNALLL) traverse the membrane as a helical segment. Residues 35–52 (WHLGLHIKKGPFNTYLLH) lie on the Cytoplasmic side of the membrane. The chain crosses the membrane as a helical span at residues 53 to 73 (LAAADFLFLSCQVGFSIATIV). Topologically, residues 74–78 (SGHED) are extracellular. The chain crosses the membrane as a helical span at residues 79 to 99 (TLYFPVTFLWFAVGLWLLAAF). Over 100–120 (SVDCCLAYMFPSFCSPNRRPR) the chain is Cytoplasmic. The helical transmembrane segment at 121–141 (FTSVVLCLVIWALTMPAVLLP) threads the bilayer. The Extracellular portion of the chain corresponds to 142–164 (ANACGLLKNGMSLLVCLKYHWTS). Residues 165-185 (VTWLAVLSGMACGASKFLLIF) form a helical membrane-spanning segment. At 186 to 199 (GNCCSSQPPPKFCK) the chain is on the cytoplasmic side. A helical membrane pass occupies residues 200-220 (LAQCSGILLFFCRLPLVVYWC). Topologically, residues 221 to 222 (LR) are extracellular. Residues 223-243 (PVLKFLLPFFFPLATLLACID) traverse the membrane as a helical segment. Topologically, residues 244 to 289 (SSAKPLLYYMKGRQLRKDPLQVALNRALGEESQSGLGGLSLPMHQV) are cytoplasmic.

This sequence belongs to the G-protein coupled receptor 1 family. Mas subfamily.

It is found in the cell membrane. Its function is as follows. Orphan receptor. May regulate nociceptor function and/or development, including the sensation or modulation of pain. The protein is Mas-related G-protein coupled receptor member G (Mrgprg) of Mus musculus (Mouse).